The primary structure comprises 344 residues: Phosphoribosylformylglycinamidine cyclo-ligase (344 aa).

It belongs to the AIR synthase family.

The protein localises to the cytoplasm. The catalysed reaction is 2-formamido-N(1)-(5-O-phospho-beta-D-ribosyl)acetamidine + ATP = 5-amino-1-(5-phospho-beta-D-ribosyl)imidazole + ADP + phosphate + H(+). Its pathway is purine metabolism; IMP biosynthesis via de novo pathway; 5-amino-1-(5-phospho-D-ribosyl)imidazole from N(2)-formyl-N(1)-(5-phospho-D-ribosyl)glycinamide: step 2/2. The polypeptide is Phosphoribosylformylglycinamidine cyclo-ligase (Neisseria meningitidis serogroup C / serotype 2a (strain ATCC 700532 / DSM 15464 / FAM18)).